Consider the following 76-residue polypeptide: Sulfur carrier protein TusA (76 aa).

Cys-14 serves as the catalytic Cysteine persulfide intermediate.

This sequence belongs to the sulfur carrier protein TusA family. Interacts with IscS.

It is found in the cytoplasm. It functions in the pathway tRNA modification. Its function is as follows. Sulfur carrier protein involved in sulfur trafficking in the cell. Part of a sulfur-relay system required for 2-thiolation during synthesis of 2-thiouridine of the modified wobble base 5-methylaminomethyl-2-thiouridine (mnm(5)s(2)U) in tRNA. Interacts with IscS and stimulates its cysteine desulfurase activity. Accepts an activated sulfur from IscS, which is then transferred to TusD, and thus determines the direction of sulfur flow from IscS to 2-thiouridine formation. Also appears to be involved in sulfur transfer for the biosynthesis of molybdopterin. The protein is Sulfur carrier protein TusA of Buchnera aphidicola subsp. Acyrthosiphon pisum (strain 5A).